The sequence spans 49 residues: DNA-directed RNA polymerase subunit Rpo12 (49 aa).

3 residues coordinate Zn(2+): C11, C27, and C30.

This sequence belongs to the archaeal Rpo12/eukaryotic RPC10 RNA polymerase subunit family. In terms of assembly, part of the RNA polymerase complex. The cofactor is Zn(2+).

The protein localises to the cytoplasm. It carries out the reaction RNA(n) + a ribonucleoside 5'-triphosphate = RNA(n+1) + diphosphate. DNA-dependent RNA polymerase (RNAP) catalyzes the transcription of DNA into RNA using the four ribonucleoside triphosphates as substrates. The protein is DNA-directed RNA polymerase subunit Rpo12 of Pyrococcus horikoshii (strain ATCC 700860 / DSM 12428 / JCM 9974 / NBRC 100139 / OT-3).